Here is a 308-residue protein sequence, read N- to C-terminus: L-lactate dehydrogenase 2 (308 aa).

NAD(+) is bound by residues Val14, Asp35, Tyr65, and 79-80 (GA). A substrate-binding site is contributed by Arg88. An NAD(+)-binding site is contributed by Ser101. Residue 120–123 (NPVD) participates in substrate binding. Thr143 contributes to the NAD(+) binding site. Residue 148–151 (DTAR) participates in substrate binding. Catalysis depends on His175, which acts as the Proton acceptor. Substrate is bound at residue Thr225.

The protein belongs to the LDH/MDH superfamily. LDH family. As to quaternary structure, homotetramer.

Its subcellular location is the cytoplasm. It carries out the reaction (S)-lactate + NAD(+) = pyruvate + NADH + H(+). It participates in fermentation; pyruvate fermentation to lactate; (S)-lactate from pyruvate: step 1/1. Functionally, catalyzes the conversion of lactate to pyruvate. The protein is L-lactate dehydrogenase 2 of Lactobacillus johnsonii (strain CNCM I-12250 / La1 / NCC 533).